Consider the following 130-residue polypeptide: Histone H2A.1 (130 aa).

Residues 1 to 22 (MSGGKGKAGSSEKASTSRSAKA) are disordered. An N-acetylserine modification is found at S2. K5 and K7 each carry N6-acetyllysine. Q105 is modified (N5-methylglutamine). S127 is subject to Phosphoserine. Residues 127–128 (SQ) carry the [ST]-Q motif motif.

It belongs to the histone H2A family. As to quaternary structure, the nucleosome is a histone octamer containing two molecules each of H2A, H2B, H3 and H4 assembled in one H3-H4 heterotetramer and two H2A-H2B heterodimers. The octamer wraps approximately 147 bp of DNA. Phosphorylated to form H2AS128ph (gamma-H2A) in response to DNA double-strand breaks (DSBs) generated by exogenous genotoxic agents and by stalled replication forks. Phosphorylation is dependent on the DNA damage checkpoint kinases MEC1/ATR and TEL1/ATM, spreads on either side of a detected DSB site and may mark the surrounding chromatin for recruitment of proteins required for DNA damage signaling and repair. Gamma-H2A is removed from the DNA prior to the strand invasion-primer extension step of the repair process and subsequently dephosphorylated. Dephosphorylation is necessary for efficient recovery from the DNA damage checkpoint. In terms of processing, acetylated by ESA1 to form H2AK4ac and H2AK7ac.

Its subcellular location is the nucleus. It localises to the chromosome. In terms of biological role, core component of nucleosome which plays a central role in DNA double strand break (DSB) repair. Nucleosomes wrap and compact DNA into chromatin, limiting DNA accessibility to the cellular machineries which require DNA as a template. Histones thereby play a central role in transcription regulation, DNA repair, DNA replication and chromosomal stability. DNA accessibility is regulated via a complex set of post-translational modifications of histones, also called histone code, and nucleosome remodeling. The protein is Histone H2A.1 (HTA1) of Lodderomyces elongisporus (strain ATCC 11503 / CBS 2605 / JCM 1781 / NBRC 1676 / NRRL YB-4239) (Yeast).